Here is a 263-residue protein sequence, read N- to C-terminus: HTH-type transcriptional repressor NanR (263 aa).

Residues M1–L22 form a disordered region. The HTH gntR-type domain maps to K30 to P98. A DNA-binding region (H-T-H motif) is located at residues E58–A77.

This sequence belongs to the NanR family.

Its function is as follows. Transcriptional repressor that controls expression of the genes required for the catabolism of sialic acids. This chain is HTH-type transcriptional repressor NanR, found in Shigella dysenteriae serotype 1 (strain Sd197).